Here is a 344-residue protein sequence, read N- to C-terminus: Ferredoxin--NADP reductase (344 aa).

FAD-binding residues include S12, D31, K39, Y43, V83, I118, D285, and S326.

The protein belongs to the ferredoxin--NADP reductase type 2 family. In terms of assembly, homodimer. It depends on FAD as a cofactor.

It carries out the reaction 2 reduced [2Fe-2S]-[ferredoxin] + NADP(+) + H(+) = 2 oxidized [2Fe-2S]-[ferredoxin] + NADPH. This Staphylococcus aureus (strain JH1) protein is Ferredoxin--NADP reductase.